The following is a 681-amino-acid chain: Chaperone protein HtpG (681 aa).

The tract at residues 1–326 is a; substrate-binding; it reads MQKGNIGVTT…SPDIPLNVSR (326 aa). The segment at 327–545 is b; that stretch reads SYLQSDSNVK…YMRRMKEMAN (219 aa). Residues 546–681 form a c region; the sequence is IQAGMSFYGE…NFVKRSIELI (136 aa). The interval 601–620 is disordered; it reads DALKKKQEGKKDEDIPTAEK.

Belongs to the heat shock protein 90 family. As to quaternary structure, homodimer.

The protein resides in the cytoplasm. Functionally, molecular chaperone. Has ATPase activity. This is Chaperone protein HtpG from Bacteroides fragilis (strain ATCC 25285 / DSM 2151 / CCUG 4856 / JCM 11019 / LMG 10263 / NCTC 9343 / Onslow / VPI 2553 / EN-2).